The primary structure comprises 156 residues: Small ribosomal subunit protein uS7 (156 aa).

The protein belongs to the universal ribosomal protein uS7 family. In terms of assembly, part of the 30S ribosomal subunit. Contacts proteins S9 and S11.

One of the primary rRNA binding proteins, it binds directly to 16S rRNA where it nucleates assembly of the head domain of the 30S subunit. Is located at the subunit interface close to the decoding center, probably blocks exit of the E-site tRNA. The protein is Small ribosomal subunit protein uS7 of Ruegeria pomeroyi (strain ATCC 700808 / DSM 15171 / DSS-3) (Silicibacter pomeroyi).